A 301-amino-acid polypeptide reads, in one-letter code: Tyrosine recombinase XerD (301 aa).

The 84-residue stretch at 7–90 (QFHTTILEQF…ALKVFFLFLK (84 aa)) folds into the Core-binding (CB) domain. Residues 109–294 (RLPSVLTPQE…AADSLIEKFL (186 aa)) enclose the Tyr recombinase domain. Residues Arg-153, Lys-175, His-246, Arg-249, and His-272 contribute to the active site. Tyr-281 acts as the O-(3'-phospho-DNA)-tyrosine intermediate in catalysis.

This sequence belongs to the 'phage' integrase family. XerD subfamily. Forms a cyclic heterotetrameric complex composed of two molecules of XerC and two molecules of XerD.

The protein localises to the cytoplasm. Site-specific tyrosine recombinase, which acts by catalyzing the cutting and rejoining of the recombining DNA molecules. The XerC-XerD complex is essential to convert dimers of the bacterial chromosome into monomers to permit their segregation at cell division. It also contributes to the segregational stability of plasmids. The chain is Tyrosine recombinase XerD from Chlamydia pneumoniae (Chlamydophila pneumoniae).